The sequence spans 376 residues: Oligopeptide transport system permease protein OppC (376 aa).

7 helical membrane passes run 46–66 (WAIL…IVPL), 149–169 (FPLL…WASV), 173–193 (LWIA…YGAV), 209–229 (IIEI…GATF), 242–262 (VIFT…RIYI), 297–317 (LAVV…SLVF), and 341–361 (VALI…ARTF). In terms of domain architecture, ABC transmembrane type-1 spans 169–366 (VAKSLWIAVV…AARTFANALN (198 aa)).

It belongs to the binding-protein-dependent transport system permease family. OppBC subfamily. As to quaternary structure, the complex is composed of two ATP-binding proteins (OppD and OppF), two transmembrane proteins (OppB and OppC) and a solute-binding protein (OppA).

The protein resides in the cell membrane. Its function is as follows. Part of the ABC transporter complex OppABCDF involved in the uptake of oligopeptides. Probably responsible for the translocation of the substrate across the membrane. The polypeptide is Oligopeptide transport system permease protein OppC (oppC) (Mycoplasma genitalium (strain ATCC 33530 / DSM 19775 / NCTC 10195 / G37) (Mycoplasmoides genitalium)).